An 88-amino-acid polypeptide reads, in one-letter code: Histone H2A-beta, sperm (88 aa).

Belongs to the histone H2A family. The nucleosome is a histone octamer containing two molecules each of H2A, H2B, H3 and H4 assembled in one H3-H4 heterotetramer and two H2A-H2B heterodimers. The octamer wraps approximately 147 bp of DNA. In terms of processing, monoubiquitination in C-terminus gives a specific tag for epigenetic transcriptional repression.

The protein resides in the nucleus. The protein localises to the chromosome. Its function is as follows. Core component of nucleosome. Nucleosomes wrap and compact DNA into chromatin, limiting DNA accessibility to the cellular machineries which require DNA as a template. Histones thereby play a central role in transcription regulation, DNA repair, DNA replication and chromosomal stability. DNA accessibility is regulated via a complex set of post-translational modifications of histones, also called histone code, and nucleosome remodeling. The protein is Histone H2A-beta, sperm of Strongylocentrotus purpuratus (Purple sea urchin).